A 196-amino-acid polypeptide reads, in one-letter code: ATP-dependent Clp protease proteolytic subunit (196 aa).

Ser98 acts as the Nucleophile in catalysis. His123 is an active-site residue.

The protein belongs to the peptidase S14 family. Fourteen ClpP subunits assemble into 2 heptameric rings which stack back to back to give a disk-like structure with a central cavity, resembling the structure of eukaryotic proteasomes.

The protein resides in the cytoplasm. It catalyses the reaction Hydrolysis of proteins to small peptides in the presence of ATP and magnesium. alpha-casein is the usual test substrate. In the absence of ATP, only oligopeptides shorter than five residues are hydrolyzed (such as succinyl-Leu-Tyr-|-NHMec, and Leu-Tyr-Leu-|-Tyr-Trp, in which cleavage of the -Tyr-|-Leu- and -Tyr-|-Trp bonds also occurs).. In terms of biological role, cleaves peptides in various proteins in a process that requires ATP hydrolysis. Has a chymotrypsin-like activity. Plays a major role in the degradation of misfolded proteins. The protein is ATP-dependent Clp protease proteolytic subunit of Lactiplantibacillus plantarum (strain ATCC BAA-793 / NCIMB 8826 / WCFS1) (Lactobacillus plantarum).